The following is a 134-amino-acid chain: MGLIVDTSIIIALERGKISTKAWSNYDQAYINPIVLTELLIGIDRVKDENKRGQCLTFIEYVKSLFTLLPFGIEEAYVYAKIIDNLYKERITIGVHDLLIAATAITYNYPILTLNTKDFKRIPELEVLTVPLKD.

One can recognise a PINc domain in the interval 4–124; sequence IVDTSIIIAL…NTKDFKRIPE (121 aa). Residue D6 participates in Mg(2+) binding.

This sequence belongs to the PINc/VapC protein family. It depends on Mg(2+) as a cofactor.

Its function is as follows. Toxic component of a type II toxin-antitoxin (TA) system. Has ssRNase activity. Its RNase activity is partially neutralized by cognate antitoxin VapB. Rapidly induces apoptosis upon microinjection into mouse fibroblasts (L929 line). Probably contributes to host cell death if bacterial cell lysis occurs during host infection. The sequence is that of Ribonuclease VapC from Rickettsia bellii (strain RML369-C).